The chain runs to 165 residues: MFKNLFKIKEREPKEITVVAPITGEIIPLEEVPDPVFAQKMMGEGVAVKPANGEVISPVDGEVKLVFQTKHAIIVEAENNAEILIHIGLDTVNLEGEGFTAHVKDGDIVKVGDKLMSFDIATIEEKATSSITPIIISNTDNVREVKNIKVTEVTAGENQILQVIN.

Residues 34-138 (DPVFAQKMMG…SSITPIIISN (105 aa)) enclose the PTS EIIA type-1 domain. Residues histidine 71 and histidine 86 each coordinate Zn(2+). The active-site Tele-phosphohistidine intermediate; for EIIA activity is the histidine 86. A Phosphohistidine; by HPr modification is found at histidine 86.

As to quaternary structure, heterodimer with glycerol kinase (glpk). Requires Zn(2+) as cofactor.

The protein localises to the cytoplasm. In terms of biological role, the phosphoenolpyruvate-dependent sugar phosphotransferase system (sugar PTS), a major carbohydrate active transport system, catalyzes the phosphorylation of incoming sugar substrates concomitantly with their translocation across the cell membrane. The enzyme II complex composed of PtsG and Crr is involved in glucose transport. The protein is PTS system glucose-specific EIIA component (crr) of Oceanobacillus iheyensis (strain DSM 14371 / CIP 107618 / JCM 11309 / KCTC 3954 / HTE831).